The following is a 51-amino-acid chain: Large ribosomal subunit protein bL33 (51 aa).

This sequence belongs to the bacterial ribosomal protein bL33 family.

The chain is Large ribosomal subunit protein bL33 from Idiomarina loihiensis (strain ATCC BAA-735 / DSM 15497 / L2-TR).